A 356-amino-acid polypeptide reads, in one-letter code: Adenine deaminase (356 aa).

His-23, His-25, and His-211 together coordinate Zn(2+). Glu-214 functions as the Proton donor in the catalytic mechanism. Residue Asp-292 participates in Zn(2+) binding. Asp-293 contacts substrate.

This sequence belongs to the metallo-dependent hydrolases superfamily. Adenosine and AMP deaminases family. Adenine deaminase type 2 subfamily. Requires Zn(2+) as cofactor.

The protein resides in the cytoplasm. It is found in the nucleus. It carries out the reaction adenine + H2O + H(+) = hypoxanthine + NH4(+). Its function is as follows. Catalyzes the hydrolytic deamination of adenine to hypoxanthine. Plays an important role in the purine salvage pathway and in nitrogen catabolism. This is Adenine deaminase from Candida albicans (strain SC5314 / ATCC MYA-2876) (Yeast).